The chain runs to 140 residues: Large ribosomal subunit protein uL16 (140 aa).

This sequence belongs to the universal ribosomal protein uL16 family. Part of the 50S ribosomal subunit.

In terms of biological role, binds 23S rRNA and is also seen to make contacts with the A and possibly P site tRNAs. The sequence is that of Large ribosomal subunit protein uL16 from Cytophaga hutchinsonii (strain ATCC 33406 / DSM 1761 / CIP 103989 / NBRC 15051 / NCIMB 9469 / D465).